The following is a 600-amino-acid chain: Methionine--tRNA ligase (600 aa).

The short motif at 12 to 22 is the 'HIGH' region element; that stretch reads PYANGPRHIGH. Residues Cys-144, Cys-147, Cys-157, and Cys-160 each contribute to the Zn(2+) site. The short motif at 351-355 is the 'KMSKS' region element; sequence KFSSS. ATP is bound at residue Ser-354.

This sequence belongs to the class-I aminoacyl-tRNA synthetase family. MetG type 1 subfamily. As to quaternary structure, monomer. Requires Zn(2+) as cofactor.

The protein resides in the cytoplasm. It catalyses the reaction tRNA(Met) + L-methionine + ATP = L-methionyl-tRNA(Met) + AMP + diphosphate. Its function is as follows. Is required not only for elongation of protein synthesis but also for the initiation of all mRNA translation through initiator tRNA(fMet) aminoacylation. The sequence is that of Methionine--tRNA ligase from Chloroflexus aggregans (strain MD-66 / DSM 9485).